The following is an 876-amino-acid chain: Valine--tRNA ligase (876 aa).

The 'HIGH' region motif lies at 44–54 (PNVTGKLHLGH). The short motif at 520–524 (KMSKS) is the 'KMSKS' region element. Lysine 523 is a binding site for ATP. Residues 805-876 (LEGLIDMDKE…VKARIEQLKA (72 aa)) adopt a coiled-coil conformation.

The protein belongs to the class-I aminoacyl-tRNA synthetase family. ValS type 1 subfamily. As to quaternary structure, monomer.

The protein localises to the cytoplasm. It carries out the reaction tRNA(Val) + L-valine + ATP = L-valyl-tRNA(Val) + AMP + diphosphate. Catalyzes the attachment of valine to tRNA(Val). As ValRS can inadvertently accommodate and process structurally similar amino acids such as threonine, to avoid such errors, it has a 'posttransfer' editing activity that hydrolyzes mischarged Thr-tRNA(Val) in a tRNA-dependent manner. This Staphylococcus aureus (strain JH1) protein is Valine--tRNA ligase.